Reading from the N-terminus, the 496-residue chain is Aldehyde dehydrogenase (496 aa).

Active-site residues include Glu-263 and Cys-296.

Belongs to the aldehyde dehydrogenase family.

It localises to the cytoplasm. The enzyme catalyses an aldehyde + NAD(+) + H2O = a carboxylate + NADH + 2 H(+). This chain is Aldehyde dehydrogenase (CLAH10), found in Davidiella tassiana (Mycosphaerella tassiana).